The chain runs to 313 residues: D-alanine--D-alanine ligase (313 aa).

An ATP-grasp domain is found at 108 to 308 (KLVWQQTGVP…YSELVVKVLS (201 aa)). 138-193 (VAKLGLPLFVKPASEGSSVAVLKVKTADALPAALSEAATHDKIVIVEKSIEGGGEY) contributes to the ATP binding site. Residues Asp262, Glu275, and Asn277 each contribute to the Mg(2+) site.

It belongs to the D-alanine--D-alanine ligase family. Mg(2+) is required as a cofactor. Requires Mn(2+) as cofactor.

It is found in the cytoplasm. It catalyses the reaction 2 D-alanine + ATP = D-alanyl-D-alanine + ADP + phosphate + H(+). Its pathway is cell wall biogenesis; peptidoglycan biosynthesis. Functionally, cell wall formation. This Burkholderia ambifaria (strain MC40-6) protein is D-alanine--D-alanine ligase.